Reading from the N-terminus, the 681-residue chain is MNISKAKLLLLPPPLTPKLNRSLYSHSQRRTRSLPHHRDKPINWNSTHSFVLHNPLLSLLEKCKLLLHLKQIQAQMIINGLILDPFASSRLIAFCALSESRYLDYSVKILKGIENPNIFSWNVTIRGFSESENPKESFLLYKQMLRHGCCESRPDHFTYPVLFKVCADLRLSSLGHMILGHVLKLRLELVSHVHNASIHMFASCGDMENARKVFDESPVRDLVSWNCLINGYKKIGEAEKAIYVYKLMESEGVKPDDVTMIGLVSSCSMLGDLNRGKEFYEYVKENGLRMTIPLVNALMDMFSKCGDIHEARRIFDNLEKRTIVSWTTMISGYARCGLLDVSRKLFDDMEEKDVVLWNAMIGGSVQAKRGQDALALFQEMQTSNTKPDEITMIHCLSACSQLGALDVGIWIHRYIEKYSLSLNVALGTSLVDMYAKCGNISEALSVFHGIQTRNSLTYTAIIGGLALHGDASTAISYFNEMIDAGIAPDEITFIGLLSACCHGGMIQTGRDYFSQMKSRFNLNPQLKHYSIMVDLLGRAGLLEEADRLMESMPMEADAAVWGALLFGCRMHGNVELGEKAAKKLLELDPSDSGIYVLLDGMYGEANMWEDAKRARRMMNERGVEKIPGCSSIEVNGIVCEFIVRDKSRPESEKIYDRLHCLGRHMRSSLSVLFSEYEITNN.

The transit peptide at 1–32 (MNISKAKLLLLPPPLTPKLNRSLYSHSQRRTR) directs the protein to the mitochondrion. PPR repeat units lie at residues 117 to 151 (NIFS…GCCE), 155 to 189 (DHFT…RLEL), 190 to 220 (VSHV…SPVR), 221 to 255 (DLVS…GVKP), 256 to 290 (DDVT…GLRM), 291 to 321 (TIPL…LEKR), 322 to 356 (TIVS…DVVL), 357 to 387 (WNAM…NTKP), 388 to 422 (DEIT…SLSL), 423 to 453 (NVAL…IQTR), 454 to 488 (NSLT…GIAP), 489 to 519 (DEIT…MKSR), and 525 to 555 (QLKH…MPME). The tract at residues 560-635 (VWGALLFGCR…IPGCSSIEVN (76 aa)) is type E motif. The tract at residues 636-666 (GIVCEFIVRDKSRPESEKIYDRLHCLGRHMR) is type E(+) motif.

Belongs to the PPR family. PCMP-E subfamily.

The protein localises to the mitochondrion. This chain is Pentatricopeptide repeat-containing protein At2g22410, mitochondrial (PCMP-E28), found in Arabidopsis thaliana (Mouse-ear cress).